We begin with the raw amino-acid sequence, 126 residues long: Small ribosomal subunit protein uS13 (126 aa).

Residues 91–126 (HRAGLPVRGQRTRTNSRTRRSAKRTVAGKKKAPSKK) are disordered. Over residues 100-126 (QRTRTNSRTRRSAKRTVAGKKKAPSKK) the composition is skewed to basic residues.

This sequence belongs to the universal ribosomal protein uS13 family. In terms of assembly, part of the 30S ribosomal subunit. Forms a loose heterodimer with protein S19. Forms two bridges to the 50S subunit in the 70S ribosome.

In terms of biological role, located at the top of the head of the 30S subunit, it contacts several helices of the 16S rRNA. In the 70S ribosome it contacts the 23S rRNA (bridge B1a) and protein L5 of the 50S subunit (bridge B1b), connecting the 2 subunits; these bridges are implicated in subunit movement. Contacts the tRNAs in the A and P-sites. In Acaryochloris marina (strain MBIC 11017), this protein is Small ribosomal subunit protein uS13.